A 248-amino-acid polypeptide reads, in one-letter code: Aquaporin Z (248 aa).

2 helical membrane passes run 11-31 (FIGT…AAAF) and 36-56 (IGFA…AFAI). The short motif at 65–67 (NPA) is the NPA 1 element. Transmembrane regions (helical) follow at residues 87 to 107 (IAAQ…IAGG), 132 to 152 (LLAC…IILG), and 161 to 181 (GFAP…SIPV). The short motif at 187–189 (NPA) is the NPA 2 element. The helical transmembrane segment at 203-223 (IAELWLFWLAPIVGAALAGLF) threads the bilayer.

Belongs to the MIP/aquaporin (TC 1.A.8) family. As to quaternary structure, homotetramer.

The protein localises to the cell inner membrane. The catalysed reaction is H2O(in) = H2O(out). Its function is as follows. Channel that permits osmotically driven movement of water in both directions. It is involved in the osmoregulation and in the maintenance of cell turgor during volume expansion in rapidly growing cells. It mediates rapid entry or exit of water in response to abrupt changes in osmolarity. This Gloeobacter violaceus (strain ATCC 29082 / PCC 7421) protein is Aquaporin Z.